Here is a 637-residue protein sequence, read N- to C-terminus: Type II restriction enzyme and methyltransferase RM.BcgI (637 aa).

In the C-terminal section; belongs to the N(4)/N(6)-methyltransferase family. Heterotrimer of two A and one B subunit. Both subunits are necessary for DNA-binding, which is sequence non-specific. The cofactor is Mg(2+).

The catalysed reaction is Endonucleolytic cleavage of DNA to give specific double-stranded fragments with terminal 5'-phosphates.. The enzyme catalyses a 2'-deoxyadenosine in DNA + S-adenosyl-L-methionine = an N(6)-methyl-2'-deoxyadenosine in DNA + S-adenosyl-L-homocysteine + H(+). Its activity is regulated as follows. DNA restriction requires S-adenosyl-L-methionine and Mg(2+), and is inhibited by S-adenosyl-homocysteine. SAM may be a cofactor for DNA restriction. A B, G, H and S subtype restriction enzyme that recognizes the double-stranded sequence 5'-CGAN(6)TGC-3' and cleaves bilaterally and symmetrically 10 base pairs upstream and 12 base pairs downstream of the sequence to release a 34-base pair fragment. Methylation of the recognition sequence occurs on the adenine in either one or both strands; seems to methylate restricted DNA. This subunit has no methylation or DNA restriction activity on its own. This Heyndrickxia coagulans (Weizmannia coagulans) protein is Type II restriction enzyme and methyltransferase RM.BcgI.